The chain runs to 313 residues: Porphobilinogen deaminase (313 aa).

Cys-242 carries the S-(dipyrrolylmethanemethyl)cysteine modification.

It belongs to the HMBS family. As to quaternary structure, monomer. It depends on dipyrromethane as a cofactor.

It catalyses the reaction 4 porphobilinogen + H2O = hydroxymethylbilane + 4 NH4(+). Its pathway is porphyrin-containing compound metabolism; protoporphyrin-IX biosynthesis; coproporphyrinogen-III from 5-aminolevulinate: step 2/4. Tetrapolymerization of the monopyrrole PBG into the hydroxymethylbilane pre-uroporphyrinogen in several discrete steps. This chain is Porphobilinogen deaminase, found in Escherichia coli (strain SE11).